Consider the following 115-residue polypeptide: Large ribosomal subunit protein bL20c (115 aa).

The protein belongs to the bacterial ribosomal protein bL20 family.

Its subcellular location is the plastid. It is found in the chloroplast. Its function is as follows. Binds directly to 23S ribosomal RNA and is necessary for the in vitro assembly process of the 50S ribosomal subunit. It is not involved in the protein synthesizing functions of that subunit. In Chlorokybus atmophyticus (Soil alga), this protein is Large ribosomal subunit protein bL20c.